We begin with the raw amino-acid sequence, 106 residues long: Small ribosomal subunit protein uS10 (106 aa).

It belongs to the universal ribosomal protein uS10 family. As to quaternary structure, part of the 30S ribosomal subunit.

Functionally, involved in the binding of tRNA to the ribosomes. The protein is Small ribosomal subunit protein uS10 of Synechococcus sp. (strain CC9605).